Consider the following 69-residue polypeptide: Conotoxin Eb6.9 (69 aa).

The first 17 residues, 1–17 (VLIIAVLFLTACQLTTA), serve as a signal peptide directing secretion. Residues 18–41 (ETYSRGRQKHRARRSTDKNSKWTR) constitute a propeptide that is removed on maturation. 3 cysteine pairs are disulfide-bonded: cysteine 43/cysteine 57, cysteine 50/cysteine 61, and cysteine 56/cysteine 68.

It belongs to the conotoxin O1 superfamily. As to expression, expressed by the venom duct.

It localises to the secreted. This is Conotoxin Eb6.9 (E1) from Conus ebraeus (Hebrew cone).